A 38-amino-acid polypeptide reads, in one-letter code: Potassium channel toxin alpha-KTx 6.4 (38 aa).

4 disulfides stabilise this stretch: C6/C27, C12/C32, C16/C34, and C22/C37.

The protein belongs to the short scorpion toxin superfamily. Potassium channel inhibitor family. Alpha-KTx 06 subfamily. Expressed by the venom gland.

It localises to the secreted. Functionally, potently, completely and reversibly blocks voltage-gated potassium channel Kv1.2/KCNA2 and Shaker B (Sh). Also blocks small conductance (SK) calcium-activated potassium channel (KCNN). The sequence is that of Potassium channel toxin alpha-KTx 6.4 from Pandinus imperator (Emperor scorpion).